Consider the following 161-residue polypeptide: SsrA-binding protein (161 aa).

It belongs to the SmpB family.

It localises to the cytoplasm. Functionally, required for rescue of stalled ribosomes mediated by trans-translation. Binds to transfer-messenger RNA (tmRNA), required for stable association of tmRNA with ribosomes. tmRNA and SmpB together mimic tRNA shape, replacing the anticodon stem-loop with SmpB. tmRNA is encoded by the ssrA gene; the 2 termini fold to resemble tRNA(Ala) and it encodes a 'tag peptide', a short internal open reading frame. During trans-translation Ala-aminoacylated tmRNA acts like a tRNA, entering the A-site of stalled ribosomes, displacing the stalled mRNA. The ribosome then switches to translate the ORF on the tmRNA; the nascent peptide is terminated with the 'tag peptide' encoded by the tmRNA and targeted for degradation. The ribosome is freed to recommence translation, which seems to be the essential function of trans-translation. This is SsrA-binding protein from Desulforamulus reducens (strain ATCC BAA-1160 / DSM 100696 / MI-1) (Desulfotomaculum reducens).